The sequence spans 183 residues: MGEKQILDADDIRRAITRIAHEIAERNAGVRDVALVGIRRRGAPLAMRIAAALEEIERVRVPVGVLDITLYRDDLGIRGPAPVVHATDIPFDISGRTVVLVDDVLYTGRTIRAALDALTDFGRPARIQLAVLIDRGHRELPIRADFVGKNVPTSRDERIATRLHEVDGGVDGVFIVRTTATSG.

A PRPP-binding motif is present at residues 98-110; that stretch reads VVLVDDVLYTGRT.

Belongs to the purine/pyrimidine phosphoribosyltransferase family. PyrR subfamily.

It carries out the reaction UMP + diphosphate = 5-phospho-alpha-D-ribose 1-diphosphate + uracil. In terms of biological role, regulates the transcription of the pyrimidine nucleotide (pyr) operon in response to exogenous pyrimidines. Its function is as follows. Also displays a weak uracil phosphoribosyltransferase activity which is not physiologically significant. The protein is Bifunctional protein PyrR of Roseiflexus sp. (strain RS-1).